Consider the following 1371-residue polypeptide: Serine protease pic autotransporter (1371 aa).

Residues 1-55 (MNKVYSLKYCPVTGGLIVVSELASRVIKKTCRRLTHILLAGIPAVYLYYPQISQA) form the signal peptide. Residues 56–301 (GIVRSDIAYQ…NVIPTDYLNQ (246 aa)) form the Peptidase S6 domain. Catalysis depends on charge relay system residues histidine 127, aspartate 155, and serine 258. Residues 1105–1371 (DTNGDAGAWA…AVNANFRYMF (267 aa)) enclose the Autotransporter domain.

Cleaved to release the mature protein from the outer membrane.

It localises to the periplasm. The protein localises to the secreted. It is found in the cell surface. The protein resides in the cell outer membrane. In terms of biological role, involved in virulence of uropathogenic E.coli although it is not known how it contributes to it. Has no mucinase activity. In Escherichia coli O6:H1 (strain CFT073 / ATCC 700928 / UPEC), this protein is Serine protease pic autotransporter (pic).